Reading from the N-terminus, the 264-residue chain is Phosphatidylglycerol--prolipoprotein diacylglyceryl transferase (264 aa).

4 consecutive transmembrane segments (helical) span residues 17 to 37 (LAIHWYGLMYLLAFAFVYLLG), 57 to 77 (LIFYSVLGVVLGGRLGYVLFY), 89 to 109 (IAFLWEGGMSFHGGLIGVILV), and 118 to 138 (GVSFFTISDFIAPLIPLGLGA). Arg140 is a binding site for a 1,2-diacyl-sn-glycero-3-phospho-(1'-sn-glycerol). The next 3 membrane-spanning stretches (helical) occupy residues 173–193 (PSQLYELGLEGLVLFALLWWF), 201–221 (GQVSAMFLMGYGAFRFLVEFT), and 237–257 (MGQWLSLPMFLGGLVLFVLTA).

It belongs to the Lgt family.

The protein resides in the cell inner membrane. It carries out the reaction L-cysteinyl-[prolipoprotein] + a 1,2-diacyl-sn-glycero-3-phospho-(1'-sn-glycerol) = an S-1,2-diacyl-sn-glyceryl-L-cysteinyl-[prolipoprotein] + sn-glycerol 1-phosphate + H(+). It participates in protein modification; lipoprotein biosynthesis (diacylglyceryl transfer). Its function is as follows. Catalyzes the transfer of the diacylglyceryl group from phosphatidylglycerol to the sulfhydryl group of the N-terminal cysteine of a prolipoprotein, the first step in the formation of mature lipoproteins. The sequence is that of Phosphatidylglycerol--prolipoprotein diacylglyceryl transferase from Bordetella avium (strain 197N).